The chain runs to 463 residues: Adenosylhomocysteinase (463 aa).

The substrate site is built by T54, D129, and E189. Residue 190-192 (TTT) participates in NAD(+) binding. Substrate contacts are provided by K219 and D223. Residues N224, 253-258 (GYGDVG), E276, N311, 332-334 (IGH), and N377 contribute to the NAD(+) site.

The protein belongs to the adenosylhomocysteinase family. NAD(+) is required as a cofactor.

It is found in the cytoplasm. The enzyme catalyses S-adenosyl-L-homocysteine + H2O = L-homocysteine + adenosine. It participates in amino-acid biosynthesis; L-homocysteine biosynthesis; L-homocysteine from S-adenosyl-L-homocysteine: step 1/1. In terms of biological role, may play a key role in the regulation of the intracellular concentration of adenosylhomocysteine. In Caulobacter vibrioides (strain ATCC 19089 / CIP 103742 / CB 15) (Caulobacter crescentus), this protein is Adenosylhomocysteinase.